We begin with the raw amino-acid sequence, 65 residues long: Large ribosomal subunit protein bL35 (65 aa).

It belongs to the bacterial ribosomal protein bL35 family.

This Acaryochloris marina (strain MBIC 11017) protein is Large ribosomal subunit protein bL35.